A 146-amino-acid polypeptide reads, in one-letter code: Large ribosomal subunit protein bL19 (146 aa).

A disordered region spans residues 119 to 146 (DYRKKGEKGVEKVETTPVSADIETQVAE).

It belongs to the bacterial ribosomal protein bL19 family.

Functionally, this protein is located at the 30S-50S ribosomal subunit interface and may play a role in the structure and function of the aminoacyl-tRNA binding site. This Bartonella tribocorum (strain CIP 105476 / IBS 506) protein is Large ribosomal subunit protein bL19.